A 501-amino-acid chain; its full sequence is Phosphatidylinositol 4-kinase type 2-beta (501 aa).

Disordered stretches follow at residues 1-30 and 65-122; these read MMAECDPTDGEPGNGSGDSTPETNFLSSEV and TELE…NHFP. Over residues 17 to 27 the composition is skewed to polar residues; the sequence is GDSTPETNFLS. The segment covering 76–88 has biased composition (low complexity); the sequence is ALLLPGPAGSLSP. The segment covering 99 to 117 has biased composition (polar residues); it reads NMLSSSSDNLASPGNSSGE. The 331-residue stretch at 141 to 471 folds into the PI3K/PI4K catalytic domain; that stretch reads GVFPERISQG…VQMPRVVVER (331 aa). Residues 147–153 are G-loop; it reads ISQGSSG. ATP contacts are provided by Ser154 and Lys169. Residues 174-176 are important for substrate binding; it reads EPY. Residues 182–195 form an important for interaction with membranes region; the sequence is KWTKYFHKVCCPCC. ATP is bound by residues 278 to 281 and 292 to 293; these read QLFV and RK. Residues 285 to 293 are important for interaction with membranes; it reads HEADFWLRK. Positions 322 to 330 are catalytic loop; sequence RNTDRGNDN. Positions 362–382 are activation loop; the sequence is AIDNGLAFPFKHPDEWRAYPF. Asp364 contacts ATP. The important for interaction with membranes stretch occupies residues 377-386; sequence WRAYPFHWAW.

This sequence belongs to the PI3/PI4-kinase family. Type II PI4K subfamily.

The protein resides in the cytoplasm. It localises to the cytosol. The protein localises to the golgi apparatus membrane. It is found in the endoplasmic reticulum membrane. Its subcellular location is the cell membrane. The protein resides in the early endosome membrane. The catalysed reaction is a 1,2-diacyl-sn-glycero-3-phospho-(1D-myo-inositol) + ATP = a 1,2-diacyl-sn-glycero-3-phospho-(1D-myo-inositol 4-phosphate) + ADP + H(+). Its function is as follows. Contributes to the overall PI4-kinase activity of the cell. This contribution may be especially significant in plasma membrane, endosomal and Golgi compartments. The phosphorylation of phosphatidylinositol (PI) to PI4P is the first committed step in the generation of phosphatidylinositol 4,5-bisphosphate (PIP2), a precursor of the second messenger inositol 1,4,5-trisphosphate (InsP3). The chain is Phosphatidylinositol 4-kinase type 2-beta (pi4k2b) from Danio rerio (Zebrafish).